The chain runs to 390 residues: GTPase Obg (390 aa).

An Obg domain is found at 1-159; that stretch reads MKFVDEAAIL…RELMLELLLL (159 aa). In terms of domain architecture, OBG-type G spans 160-333; that stretch reads ADVGMLGLPN…LCWDVMSFLN (174 aa). Residues 166–173, 191–195, 213–216, 283–286, and 314–316 each bind GTP; these read GLPNAGKS, FTTLI, DIPG, NKID, and SAA. Mg(2+) contacts are provided by Ser-173 and Thr-193. A compositionally biased stretch (acidic residues) spans 364–384; sequence VEAEAEDDWDDDWDEEDDDGV. The tract at residues 364 to 390 is disordered; sequence VEAEAEDDWDDDWDEEDDDGVEIIYER.

It belongs to the TRAFAC class OBG-HflX-like GTPase superfamily. OBG GTPase family. Monomer. Mg(2+) serves as cofactor.

It localises to the cytoplasm. Functionally, an essential GTPase which binds GTP, GDP and possibly (p)ppGpp with moderate affinity, with high nucleotide exchange rates and a fairly low GTP hydrolysis rate. Plays a role in control of the cell cycle, stress response, ribosome biogenesis and in those bacteria that undergo differentiation, in morphogenesis control. The polypeptide is GTPase Obg (Yersinia pestis).